Here is a 140-residue protein sequence, read N- to C-terminus: Putative pre-16S rRNA nuclease (140 aa).

It belongs to the YqgF nuclease family.

It localises to the cytoplasm. Functionally, could be a nuclease involved in processing of the 5'-end of pre-16S rRNA. This is Putative pre-16S rRNA nuclease from Actinobacillus succinogenes (strain ATCC 55618 / DSM 22257 / CCUG 43843 / 130Z).